A 681-amino-acid chain; its full sequence is Oligopeptidase A (681 aa).

His-470 contacts Zn(2+). Glu-471 is an active-site residue. Zn(2+) contacts are provided by His-474 and His-477.

Belongs to the peptidase M3 family. Requires Zn(2+) as cofactor.

The catalysed reaction is Hydrolysis of oligopeptides, with broad specificity. Gly or Ala commonly occur as P1 or P1' residues, but more distant residues are also important, as is shown by the fact that Z-Gly-Pro-Gly-|-Gly-Pro-Ala is cleaved, but not Z-(Gly)(5).. May play a specific role in the degradation of signal peptides after they are released from precursor forms of secreted proteins. Can cleave N-acetyl-L-Ala(4). This is Oligopeptidase A (prlC) from Haemophilus influenzae (strain ATCC 51907 / DSM 11121 / KW20 / Rd).